Reading from the N-terminus, the 350-residue chain is Histidinol-phosphate aminotransferase (350 aa).

Lysine 209 bears the N6-(pyridoxal phosphate)lysine mark.

This sequence belongs to the class-II pyridoxal-phosphate-dependent aminotransferase family. Histidinol-phosphate aminotransferase subfamily. Homodimer. It depends on pyridoxal 5'-phosphate as a cofactor.

It catalyses the reaction L-histidinol phosphate + 2-oxoglutarate = 3-(imidazol-4-yl)-2-oxopropyl phosphate + L-glutamate. The protein operates within amino-acid biosynthesis; L-histidine biosynthesis; L-histidine from 5-phospho-alpha-D-ribose 1-diphosphate: step 7/9. The protein is Histidinol-phosphate aminotransferase of Geobacter sp. (strain M21).